We begin with the raw amino-acid sequence, 131 residues long: Aspartate 1-decarboxylase (131 aa).

S25 acts as the Schiff-base intermediate with substrate; via pyruvic acid in catalysis. S25 bears the Pyruvic acid (Ser) mark. T57 provides a ligand contact to substrate. Y58 (proton donor) is an active-site residue. 73-75 (GAA) is a binding site for substrate.

This sequence belongs to the PanD family. In terms of assembly, heterooctamer of four alpha and four beta subunits. The cofactor is pyruvate. In terms of processing, is synthesized initially as an inactive proenzyme, which is activated by self-cleavage at a specific serine bond to produce a beta-subunit with a hydroxyl group at its C-terminus and an alpha-subunit with a pyruvoyl group at its N-terminus.

It is found in the cytoplasm. It catalyses the reaction L-aspartate + H(+) = beta-alanine + CO2. The protein operates within cofactor biosynthesis; (R)-pantothenate biosynthesis; beta-alanine from L-aspartate: step 1/1. Functionally, catalyzes the pyruvoyl-dependent decarboxylation of aspartate to produce beta-alanine. In Chlorobium phaeobacteroides (strain DSM 266 / SMG 266 / 2430), this protein is Aspartate 1-decarboxylase.